We begin with the raw amino-acid sequence, 66 residues long: Small ribosomal subunit protein bS21 (66 aa).

Belongs to the bacterial ribosomal protein bS21 family.

This Rickettsia peacockii (strain Rustic) protein is Small ribosomal subunit protein bS21.